The following is a 1596-amino-acid chain: SET-binding protein (1596 aa).

Residues 1-12 (MESRETLSSSRQ) are compositionally biased toward polar residues. 3 disordered regions span residues 1 to 83 (MESR…WVAG), 134 to 426 (KQSG…SIKA), and 475 to 518 (SPSV…SRKL). Residues 64–81 (GSGRDVDSNSNADSEKWV) are compositionally biased toward basic and acidic residues. Residues 164–175 (LTASDLAASDLK) show a composition bias toward low complexity. Polar residues-rich tracts occupy residues 213 to 236 (KSSS…QNCF) and 270 to 282 (AGNT…NNNK). Residues 290–306 (APSPSSHSSPAPPSSSA) are compositionally biased toward low complexity. Residues 363–372 (DNTEGKREGY) are compositionally biased toward basic and acidic residues. The segment covering 375–395 (DSAQEASPARQNVSSASNPEN) has biased composition (polar residues). The a.T hook 1 DNA-binding region spans 584–596 (KKKRGRPKKQPLL). Disordered stretches follow at residues 604 to 624 (GTST…KKRK), 722 to 763 (YIGK…AVPS), and 777 to 796 (HPLS…ASTE). A compositionally biased stretch (polar residues) spans 779–796 (LSTQLGGSNGNLSPASTE). An N6-acetyllysine modification is found at Lys817. Positions 854 to 880 (SPVSESHSEETIPSDSGIGTDNNSTSD) are enriched in polar residues. A disordered region spans residues 854–889 (SPVSESHSEETIPSDSGIGTDNNSTSDQAEKSSESR). Residues 1016–1028 (KKKRGRPAKTNDT) constitute a DNA-binding region (a.T hook 2). Disordered stretches follow at residues 1134 to 1164 (PPKV…DRIL), 1202 to 1225 (EKNK…SKNN), 1245 to 1300 (AKEK…GSKR), 1325 to 1344 (SSYD…KVDQ), 1440 to 1473 (QRQS…DQMP), and 1518 to 1596 (EAPP…EVLP). Residues 1146-1159 (RLHKRKHKHKHKHK) are compositionally biased toward basic residues. A compositionally biased stretch (basic residues) spans 1450 to 1459 (VKKRRGRPRK). Residues 1451 to 1463 (KKRRGRPRKQPTQ) constitute a DNA-binding region (a.T hook 3). 3 consecutive repeat copies span residues 1520-1527 (PPLPPPPP), 1528-1535 (PPLPPPPP), and 1536-1543 (PPLPPPPP). A 3 X 8 AA tandem repeats of P-P-L-P-P-P-P-P region spans residues 1520-1543 (PPLPPPPPPPLPPPPPPPLPPPPP). 2 stretches are compositionally biased toward pro residues: residues 1520–1546 (PPLP…PLPK) and 1560–1572 (PAQP…PQQP).

In terms of assembly, interacts with SET. In terms of tissue distribution, expressed in numerous tissues. Expressed at low levels in myeloid and monocytic cells as well as in CD34+ cells; expression levels are higher in myeloid malignancies.

Its subcellular location is the nucleus. The sequence is that of SET-binding protein (SETBP1) from Homo sapiens (Human).